A 642-amino-acid chain; its full sequence is Chaperone protein DnaK (642 aa).

At Thr-198 the chain carries Phosphothreonine; by autocatalysis. Residues 602 to 642 are disordered; it reads EAAGGAEAEAAAGGHGGASGSHDDKVVDADFEEVDGDKKGK. Residues 603–613 show a composition bias toward low complexity; that stretch reads AAGGAEAEAAA.

It belongs to the heat shock protein 70 family.

Its function is as follows. Acts as a chaperone. The sequence is that of Chaperone protein DnaK from Paramagnetospirillum magneticum (strain ATCC 700264 / AMB-1) (Magnetospirillum magneticum).